A 305-amino-acid chain; its full sequence is Tyrosine recombinase XerC (305 aa).

In terms of domain architecture, Core-binding (CB) spans 4-95 (TSIQALINKW…AVKNFYRFLE (92 aa)). The Tyr recombinase domain occupies 116 to 298 (LLPKALSEDD…SIKHLEAVYT (183 aa)). Catalysis depends on residues Arg159, Lys182, His250, Arg253, and His276. The active-site O-(3'-phospho-DNA)-tyrosine intermediate is Tyr285.

It belongs to the 'phage' integrase family. XerC subfamily. As to quaternary structure, forms a cyclic heterotetrameric complex composed of two molecules of XerC and two molecules of XerD.

The protein resides in the cytoplasm. Functionally, site-specific tyrosine recombinase, which acts by catalyzing the cutting and rejoining of the recombining DNA molecules. The XerC-XerD complex is essential to convert dimers of the bacterial chromosome into monomers to permit their segregation at cell division. It also contributes to the segregational stability of plasmids. This is Tyrosine recombinase XerC from Rickettsia conorii (strain ATCC VR-613 / Malish 7).